The following is a 177-amino-acid chain: MAELTTIARPYAKAAFDFAIEQDAVDSWAEMLTFAALVSENETMQPLLAGSLASTKLAALFISVCGEQVNVQGQNLIKVMAENGRLKVLPAVSQLFTEYRNEWAKEVEADVVSATELSSEQQQQISISLEKRLARKVKLNCSTDAALIAGVIIKTGDLVIDGSVRGKLSRLSDKLQS.

Belongs to the ATPase delta chain family. As to quaternary structure, F-type ATPases have 2 components, F(1) - the catalytic core - and F(0) - the membrane proton channel. F(1) has five subunits: alpha(3), beta(3), gamma(1), delta(1), epsilon(1). F(0) has three main subunits: a(1), b(2) and c(10-14). The alpha and beta chains form an alternating ring which encloses part of the gamma chain. F(1) is attached to F(0) by a central stalk formed by the gamma and epsilon chains, while a peripheral stalk is formed by the delta and b chains.

The protein resides in the cell inner membrane. Its function is as follows. F(1)F(0) ATP synthase produces ATP from ADP in the presence of a proton or sodium gradient. F-type ATPases consist of two structural domains, F(1) containing the extramembraneous catalytic core and F(0) containing the membrane proton channel, linked together by a central stalk and a peripheral stalk. During catalysis, ATP synthesis in the catalytic domain of F(1) is coupled via a rotary mechanism of the central stalk subunits to proton translocation. Functionally, this protein is part of the stalk that links CF(0) to CF(1). It either transmits conformational changes from CF(0) to CF(1) or is implicated in proton conduction. This is ATP synthase subunit delta from Shewanella baltica (strain OS223).